A 165-amino-acid polypeptide reads, in one-letter code: Lymphocyte antigen 6K (165 aa).

Residues 1 to 17 form the signal peptide; that stretch reads MALLALLLVVALPRVWT. N-linked (GlcNAc...) asparagine glycosylation occurs at N20. Residues 47–141 enclose the UPAR/Ly6 domain; the sequence is ERENTFECQN…VFKEYAGSMG (95 aa). The GPI-anchor amidated glycine moiety is linked to residue G138. Residues 139 to 165 constitute a propeptide, removed in mature form; the sequence is SMGESCGGLWLAILLLLASIAAGLSLS.

In terms of assembly, interacts with TEX101. In terms of tissue distribution, specifically expressed in testis (at protein level).

The protein localises to the secreted. Its subcellular location is the cytoplasm. The protein resides in the cell membrane. It localises to the cytoplasmic vesicle. It is found in the secretory vesicle. The protein localises to the acrosome. Its subcellular location is the membrane raft. In terms of biological role, required for sperm migration into the oviduct and male fertility by controlling binding of sperm to zona pellucida. May play a role in cell growth. The polypeptide is Lymphocyte antigen 6K (Homo sapiens (Human)).